The primary structure comprises 243 residues: Glycerophosphodiester phosphodiesterase (243 aa).

The 237-residue stretch at 3–239 (TLVIAHRGDS…DDPETLINLV (237 aa)) folds into the GP-PDE domain. Residue His-8 is the Proton acceptor of the active site. Ca(2+) is bound by residues Glu-35 and Asp-37. His-50 (proton donor) is an active-site residue. Residue Glu-110 coordinates Ca(2+).

It belongs to the glycerophosphoryl diester phosphodiesterase family. In terms of assembly, homodimer. The cofactor is Mg(2+). It depends on Ca(2+) as a cofactor.

It carries out the reaction a sn-glycero-3-phosphodiester + H2O = an alcohol + sn-glycerol 3-phosphate + H(+). The catalysed reaction is sn-glycerol 3-phosphocholine + H2O = sn-glycerol 3-phosphate + choline + H(+). Inhibited by EDTA. Its function is as follows. Glycerophosphodiester phosphodiesterase hydrolyzes glycerophosphodiesters into glycerol-3-phosphate (G3P) and the corresponding alcohol. Can use glycerophosphocholine. In Caldanaerobacter subterraneus subsp. tengcongensis (strain DSM 15242 / JCM 11007 / NBRC 100824 / MB4) (Thermoanaerobacter tengcongensis), this protein is Glycerophosphodiester phosphodiesterase.